The primary structure comprises 419 residues: MKQTVLKNNLQNLLESAENILLLQGPVGDFFLRLADWLTANGKTVHKFNFNAGDDYFYPPTQAHTVVFNDNYDAFPEFLQEYITQHHIQAVVCFGDTRPYHVIAKRIANENQASFWAFEEGYFRPYYITLEKDGVNAFSPLPRRADFFLEQFPKLAQQEYKAPTPVHGGFTPMAKNAIRYYIELFRNLRKYPDYIHHRAPNAGHYLKPWSLSILKRLNYYIEDIQIAKRVEAGKYGKFFIVPLQVFNDSQVRIHCDFPSVRSFLLHVLSSFAEHAPADTNIIIKHHPMDRGFIDYWRDIKRFIKEHPELKGRVIYVHDVPLPVFLRHGLGMVTINSTSGLSGLIHNMPVKVLGRAYYDIPGITDQNTLAEFWNHPTPPDKELFHAYRMYHLNVTQINGNFYSQVFFPNKNTSDSSTPTT.

It is found in the cell inner membrane. Involved in the phospholipid modification of the capsular polysaccharide, a strong requirement for its translocation to the cell surface. The polypeptide is Capsule polysaccharide modification protein LipB (lipB) (Neisseria meningitidis serogroup A / serotype 4A (strain DSM 15465 / Z2491)).